A 301-amino-acid polypeptide reads, in one-letter code: Probable alpha-L-glutamate ligase (301 aa).

One can recognise an ATP-grasp domain in the interval 104 to 287; the sequence is LQLLSRKGVG…IAGMIIEYIE (184 aa). ATP-binding positions include Lys141, 178 to 179, Asp187, and 211 to 213; these read EY and RSN. The Mg(2+) site is built by Asp248, Glu260, and Asn262. Mn(2+)-binding residues include Asp248, Glu260, and Asn262.

It belongs to the RimK family. Mg(2+) is required as a cofactor. The cofactor is Mn(2+).

In Photobacterium profundum (strain SS9), this protein is Probable alpha-L-glutamate ligase.